The chain runs to 283 residues: MRQYLDLCQRIVDQGVWVENERTGKRCLTVINADLTYDVGNNQFPLVTTRKSFWKAAVAELLGYIRGYDNAADFRQLGTKTWDANANLNQAWLNNPYRKGEDDMGRVYGVQGRAWAKPDGGHIDQLKKIVDDLSRGVDDRGEILNFYNPGEFHMGCLRPCMYSHHFSLLGDTLYLNSTQRSCDVPLGLNFNMVQVYVFLALMAQITGKKPGLAYHKIVNAHIYQDQLELMRDVQLKREPFPAPQFHINPKIKTLQDLETWVTLDDFDVTGYQFHDPIQYPFSV.

Residue R22 coordinates dUMP. C160 serves as the catalytic Nucleophile. Residues 180–183 (RSCD), N191, and 221–223 (HIY) each bind dUMP. A (6R)-5,10-methylene-5,6,7,8-tetrahydrofolate-binding site is contributed by D183. Residue S282 coordinates (6R)-5,10-methylene-5,6,7,8-tetrahydrofolate.

It belongs to the thymidylate synthase family. Bacterial-type ThyA subfamily. In terms of assembly, homodimer.

It localises to the cytoplasm. The catalysed reaction is dUMP + (6R)-5,10-methylene-5,6,7,8-tetrahydrofolate = 7,8-dihydrofolate + dTMP. Its pathway is pyrimidine metabolism; dTTP biosynthesis. Functionally, catalyzes the reductive methylation of 2'-deoxyuridine-5'-monophosphate (dUMP) to 2'-deoxythymidine-5'-monophosphate (dTMP) while utilizing 5,10-methylenetetrahydrofolate (mTHF) as the methyl donor and reductant in the reaction, yielding dihydrofolate (DHF) as a by-product. This enzymatic reaction provides an intracellular de novo source of dTMP, an essential precursor for DNA biosynthesis. This Vibrio cholerae serotype O1 (strain ATCC 39315 / El Tor Inaba N16961) protein is Thymidylate synthase.